The chain runs to 1059 residues: RNA-binding protein 26 (1059 aa).

Basic and acidic residues-rich tracts occupy residues 98-114 (EKEI…EKEK) and 130-147 (RHKD…DRES). The segment at 98-275 (EKEIKKDEVN…PVDNSYASGS (178 aa)) is disordered. A compositionally biased stretch (polar residues) spans 172–182 (LNSNKVQNAKN). Basic and acidic residues predominate over residues 184-213 (RSRDDRKRDDRFRKREYDRNVPRRDSYRDR). Residues 214-231 (YNRRRGRSRSYSRSRSRS) show a composition bias toward basic residues. Residues 232-266 (WSKERQRDRDRSRSRTRSRDKDSGKPKFDLDRPDP) are compositionally biased toward basic and acidic residues. The C3H1-type zinc finger occupies 327–355 (QMQKKRCRDYDEKGFCMRGDMCPFDHGSD). The segment covering 375–428 (PVLEGPPPPGLPPPPSLLTPPPVNLQPPPVPPPGPLPPSLPPVTGPPPPLPPLQ) has biased composition (pro residues). The segment at 375 to 443 (PVLEGPPPPG…APPNSATSSV (69 aa)) is disordered. The segment covering 434–443 (APPNSATSSV) has biased composition (low complexity). The region spanning 581-655 (TKLELRRIPP…RFIRMYWHRE (75 aa)) is the RRM 1 domain. The stretch at 771 to 873 (GDAQKKKQEA…LLDTELDLYN (103 aa)) forms a coiled coil. Residues 942–1011 (RALKISGFTE…QDLKLAWNKP (70 aa)) enclose the RRM 2 domain. The segment at 1010 to 1059 (KPVPNASSTEVEDADQEEEEFHEDSIVDDSLLQDDDEEEEDDNESRSWRR) is disordered. Composition is skewed to acidic residues over residues 1019–1031 (EVED…EEFH) and 1040–1052 (LLQD…EDDN).

Functionally, may be involved in the turnover of nuclear polyadenylated (pA+) RNA. The protein is RNA-binding protein 26 of Xenopus laevis (African clawed frog).